We begin with the raw amino-acid sequence, 229 residues long: tRNA pseudouridine synthase B (229 aa).

The active-site Nucleophile is the aspartate 42.

This sequence belongs to the pseudouridine synthase TruB family. Type 1 subfamily.

The enzyme catalyses uridine(55) in tRNA = pseudouridine(55) in tRNA. Functionally, responsible for synthesis of pseudouridine from uracil-55 in the psi GC loop of transfer RNAs. This chain is tRNA pseudouridine synthase B, found in Ureaplasma urealyticum serovar 10 (strain ATCC 33699 / Western).